Consider the following 282-residue polypeptide: MKNKKDKTQKPKVIDEKFVAFFKSLNIEPQNWQFYEDAFVHSSYVNENEDARASYDRLEFLGDALIDFIVAKKLFELYPNYNEGMLTRTKIEIVKGENLNRIGKELNFGNFIKLGKGMPYTETLFGDVLEALVAAIYEDLGIEKANQFVEEHIFKKTYSEILKYNFFSLFQEQKLPEPRVRVSLTSNNLVLSIIELNGDIIWSQAVPNSKHYDDKSVLEHNAMSAFTQFLKSGKGINFFSDIKNKLDSQKPMRALTVRPKKINWKARKPKLKALKNKVKADS.

In terms of domain architecture, RNase III spans 18–141 (FVAFFKSLNI…LVAAIYEDLG (124 aa)). Residue glutamate 59 participates in Mg(2+) binding. Aspartate 63 is an active-site residue. The Mg(2+) site is built by aspartate 127 and glutamate 130. The active site involves glutamate 130.

The protein belongs to the ribonuclease III family. In terms of assembly, homodimer. The cofactor is Mg(2+).

Its subcellular location is the cytoplasm. It carries out the reaction Endonucleolytic cleavage to 5'-phosphomonoester.. Its function is as follows. Digests double-stranded RNA. Involved in the processing of primary rRNA transcript to yield the immediate precursors to the large and small rRNAs (23S and 16S). Processes some mRNAs, and tRNAs when they are encoded in the rRNA operon. Processes pre-crRNA and tracrRNA of type II CRISPR loci if present in the organism. The protein is Ribonuclease 3 of Mycoplasmoides pneumoniae (strain ATCC 15531 / DSM 23978 / CIP 103766 / NBRC 14401 / NCTC 10119 / FH) (Mycoplasma pneumoniae).